The chain runs to 345 residues: UDP-N-acetylenolpyruvoylglucosamine reductase (345 aa).

Residues 27-197 form the FAD-binding PCMH-type domain; it reads FDASAELAYE…TKVVFKLPKQ (171 aa). Residue Arg-174 is part of the active site. The Proton donor role is filled by Ser-245. Residue Glu-341 is part of the active site.

This sequence belongs to the MurB family. FAD serves as cofactor.

Its subcellular location is the cytoplasm. The catalysed reaction is UDP-N-acetyl-alpha-D-muramate + NADP(+) = UDP-N-acetyl-3-O-(1-carboxyvinyl)-alpha-D-glucosamine + NADPH + H(+). It participates in cell wall biogenesis; peptidoglycan biosynthesis. Cell wall formation. In Polynucleobacter asymbioticus (strain DSM 18221 / CIP 109841 / QLW-P1DMWA-1) (Polynucleobacter necessarius subsp. asymbioticus), this protein is UDP-N-acetylenolpyruvoylglucosamine reductase.